A 1053-amino-acid chain; its full sequence is Carbamoyl phosphate synthase large chain (1053 aa).

The carboxyphosphate synthetic domain stretch occupies residues 1-397; sequence MPKNTSLKKV…GFKKALRSLD (397 aa). Arginine 127, arginine 167, glycine 173, glycine 174, glutamate 206, valine 208, glutamate 213, glycine 239, valine 240, histidine 241, glutamine 282, and glutamate 294 together coordinate ATP. The ATP-grasp 1 domain occupies 131–323; the sequence is KKLMLEIGEP…IARVAAKVAI (193 aa). Mg(2+) contacts are provided by glutamine 282, glutamate 294, and asparagine 296. Glutamine 282, glutamate 294, and asparagine 296 together coordinate Mn(2+). The tract at residues 398 to 530 is oligomerization domain; the sequence is TDIYRHTDLN…YSTWEQECEL (133 aa). A carbamoyl phosphate synthetic domain region spans residues 531–919; that stretch reads TQSDRKKILI…YKASQAADNT (389 aa). The region spanning 661–852 is the ATP-grasp 2 domain; sequence SVLLDQNNIP…LAKIAAKLML (192 aa). ATP-binding residues include arginine 697, arginine 736, leucine 738, glutamate 743, glycine 768, valine 769, histidine 770, serine 771, glutamine 811, and glutamate 823. The Mg(2+) site is built by glutamine 811, glutamate 823, and asparagine 825. 3 residues coordinate Mn(2+): glutamine 811, glutamate 823, and asparagine 825. The MGS-like domain occupies 918 to 1053; it reads NTIPLKGNVF…TVEPLSHYHS (136 aa). An allosteric domain region spans residues 920-1053; that stretch reads IPLKGNVFIS…TVEPLSHYHS (134 aa).

Belongs to the CarB family. As to quaternary structure, composed of two chains; the small (or glutamine) chain promotes the hydrolysis of glutamine to ammonia, which is used by the large (or ammonia) chain to synthesize carbamoyl phosphate. Tetramer of heterodimers (alpha,beta)4. Mg(2+) serves as cofactor. It depends on Mn(2+) as a cofactor.

It carries out the reaction hydrogencarbonate + L-glutamine + 2 ATP + H2O = carbamoyl phosphate + L-glutamate + 2 ADP + phosphate + 2 H(+). The enzyme catalyses hydrogencarbonate + NH4(+) + 2 ATP = carbamoyl phosphate + 2 ADP + phosphate + 2 H(+). The protein operates within amino-acid biosynthesis; L-arginine biosynthesis; carbamoyl phosphate from bicarbonate: step 1/1. It participates in pyrimidine metabolism; UMP biosynthesis via de novo pathway; (S)-dihydroorotate from bicarbonate: step 1/3. In terms of biological role, large subunit of the glutamine-dependent carbamoyl phosphate synthetase (CPSase). CPSase catalyzes the formation of carbamoyl phosphate from the ammonia moiety of glutamine, carbonate, and phosphate donated by ATP, constituting the first step of 2 biosynthetic pathways, one leading to arginine and/or urea and the other to pyrimidine nucleotides. The large subunit (synthetase) binds the substrates ammonia (free or transferred from glutamine from the small subunit), hydrogencarbonate and ATP and carries out an ATP-coupled ligase reaction, activating hydrogencarbonate by forming carboxy phosphate which reacts with ammonia to form carbamoyl phosphate. The sequence is that of Carbamoyl phosphate synthase large chain from Methanocorpusculum labreanum (strain ATCC 43576 / DSM 4855 / Z).